The sequence spans 492 residues: N-succinylglutamate 5-semialdehyde dehydrogenase (492 aa).

225-230 (GSSNTG) contributes to the NAD(+) binding site. Catalysis depends on residues Glu-248 and Cys-282.

The protein belongs to the aldehyde dehydrogenase family. AstD subfamily.

It carries out the reaction N-succinyl-L-glutamate 5-semialdehyde + NAD(+) + H2O = N-succinyl-L-glutamate + NADH + 2 H(+). The protein operates within amino-acid degradation; L-arginine degradation via AST pathway; L-glutamate and succinate from L-arginine: step 4/5. Catalyzes the NAD-dependent reduction of succinylglutamate semialdehyde into succinylglutamate. This chain is N-succinylglutamate 5-semialdehyde dehydrogenase, found in Colwellia psychrerythraea (strain 34H / ATCC BAA-681) (Vibrio psychroerythus).